Here is a 326-residue protein sequence, read N- to C-terminus: Vitamin B12 import system permease protein BtuC (326 aa).

9 helical membrane-spanning segments follow: residues 15–35, 61–81, 88–108, 112–132, 146–166, 184–204, 240–260, 274–294, and 302–322; these read WLLC…CAGE, LAVL…QALF, PGLL…VLLG, LPNW…TLIL, LLAG…AIYF, GGVD…LLWI, GWMV…GLVI, VLLP…DVVA, and ELPI…WLLL.

This sequence belongs to the binding-protein-dependent transport system permease family. FecCD subfamily. As to quaternary structure, the complex is composed of two ATP-binding proteins (BtuD), two transmembrane proteins (BtuC) and a solute-binding protein (BtuF).

It is found in the cell inner membrane. In terms of biological role, part of the ABC transporter complex BtuCDF involved in vitamin B12 import. Involved in the translocation of the substrate across the membrane. This Escherichia coli O17:K52:H18 (strain UMN026 / ExPEC) protein is Vitamin B12 import system permease protein BtuC.